A 560-amino-acid polypeptide reads, in one-letter code: Choline/ethanolamine transporter FLVCR1 (560 aa).

The segment at 1–22 (MVKLNDEEGAAMAPGHQPTNGY) is disordered. At 1-99 (MVKLNDEEGA…TPGTEGSPAP (99 aa)) the chain is on the cytoplasmic side. Residue Ser-56 is modified to Phosphoserine. Positions 68 to 99 (QTPLAPEEETQTRLLPTGPGEETPGTEGSPAP) are disordered. A compositionally biased stretch (low complexity) spans 83–95 (PTGPGEETPGTEG). Residues 100 to 124 (QTALSARRFVVLLIFSLYSLVNAFQ) form a helical membrane-spanning segment. Residues 125-142 (WIQYSVISNVFEGFYGVS) are Extracellular-facing. Residues 143-170 (SLHIDWLSMVYMLAYVPLIFPATWLLDT) traverse the membrane as a helical segment. Residues 171 to 172 (RG) lie on the Cytoplasmic side of the membrane. Residues 173 to 192 (LRLTALLGSGLNCLGAWVKC) traverse the membrane as a helical segment. The Extracellular segment spans residues 193-199 (ASVQQHL). Residues 200–228 (FWVTMLGQCLCSVAQVFILGLPSRIASVW) form a helical membrane-spanning segment. Gln-214 provides a ligand contact to ethanolamine. The Cytoplasmic segment spans residues 229–233 (FGPKE). Residues 234-259 (VSTACATAVLGNQLGAAIGFLLPPVL) form a helical membrane-spanning segment. Over 260–265 (VPNTQN) the chain is Extracellular. N-linked (GlcNAc...) asparagine glycosylation occurs at Asn-265. The helical transmembrane segment at 266-295 (NTDLLACNISTMFYGTSSVATFLCFLTIIA) threads the bilayer. The Cytoplasmic segment spans residues 296–331 (FKEKPQYPPSQAQAALQNSPPAKYSYKKSIRNLFRN). Residues 332 to 362 (VPFVLLLITYGIITGAFYSVSTLLNQMILTY) form a helical membrane-spanning segment. Residues 363–366 (YKGE) lie on the Extracellular side of the membrane. Residues 367 to 395 (EVSAGKIGLTLVVAGMVGSILCGFWLDYT) traverse the membrane as a helical segment. Residues 396–397 (KI) are Cytoplasmic-facing. Residues 398–420 (YKQTTLIVYILSFLGMVIFTFTL) form a helical membrane-spanning segment. Over 421–423 (DLG) the chain is Extracellular. The helical transmembrane segment at 424-453 (YGIVVFVTGGVLGFFMTGYLPLGFEFAVEI) threads the bilayer. The Cytoplasmic portion of the chain corresponds to 454–461 (TYPESEGT). The chain crosses the membrane as a helical span at residues 462-487 (SSGLLNAAAQIFGILFTLAQGKLTTD). An ethanolamine-binding site is contributed by Gln-471. Gln-471 contributes to the choline binding site. Residues 488 to 489 (YS) lie on the Extracellular side of the membrane. The helical transmembrane segment at 490-512 (PKAGNIFLCVWLFLGIILTALIK) threads the bilayer. Topologically, residues 513–560 (SDLRRHNINIGIANGDIKAVPVEDTVEDSPTDKESKTIVMSKQSESAI) are cytoplasmic. The disordered stretch occupies residues 537-560 (TVEDSPTDKESKTIVMSKQSESAI). Ser-541 is subject to Phosphoserine. The span at 550–560 (IVMSKQSESAI) shows a compositional bias: polar residues.

Belongs to the major facilitator superfamily. Feline leukemia virus subgroup C receptor (TC 2.A.1.28.1) family.

It is found in the cell membrane. The catalysed reaction is choline(out) = choline(in). It carries out the reaction ethanolamine(in) = ethanolamine(out). It catalyses the reaction heme b(in) = heme b(out). In terms of biological role, uniporter that mediates the transport of extracellular choline and ethanolamine into cells, thereby playing a key role in phospholipid biosynthesis. Choline and ethanolamine are the precursors of phosphatidylcholine and phosphatidylethanolamine, respectively, the two most abundant phospholipids. Transport is not coupled with proton transport and is exclusively driven by the choline (or ethanolamine) gradient across the plasma membrane. Also acts as a heme b transporter that mediates heme efflux from the cytoplasm to the extracellular compartment. (Microbial infection) Confers susceptibility to Feline leukemia virus subgroup C (FeLV-C) infection, which is associated with fatal erythroid aplasia, also known as aplastic anemia. The polypeptide is Choline/ethanolamine transporter FLVCR1 (FLVCR1) (Felis catus (Cat)).